The chain runs to 322 residues: Mitochondrial thiamine pyrophosphate carrier 1 (322 aa).

Solcar repeat units lie at residues 12-111 (GSKT…VTLA), 122-208 (PAAA…LRVP), and 215-310 (PFGS…VLRL). The next 6 helical transmembrane spans lie at 18–38 (MIAG…LDVV), 92–108 (LMYV…YRSV), 128–148 (FIAG…LDLL), 180–200 (FFQG…IFFA), 221–241 (ATAG…FDLI), and 285–302 (GLTV…VTMW).

The protein belongs to the mitochondrial carrier (TC 2.A.29) family.

It localises to the mitochondrion inner membrane. Functionally, mitochondrial transporter that mediates uptake of thiamine pyrophosphate (ThPP) into mitochondria. The polypeptide is Mitochondrial thiamine pyrophosphate carrier 1 (tpc1) (Sclerotinia sclerotiorum (strain ATCC 18683 / 1980 / Ss-1) (White mold)).